Here is a 99-residue protein sequence, read N- to C-terminus: Small ribosomal subunit protein bS18 (99 aa).

This sequence belongs to the bacterial ribosomal protein bS18 family. Part of the 30S ribosomal subunit. Forms a tight heterodimer with protein bS6.

Binds as a heterodimer with protein bS6 to the central domain of the 16S rRNA, where it helps stabilize the platform of the 30S subunit. The polypeptide is Small ribosomal subunit protein bS18 (Christiangramia forsetii (strain DSM 17595 / CGMCC 1.15422 / KT0803) (Gramella forsetii)).